A 271-amino-acid chain; its full sequence is Thymidine kinase (271 aa).

ATP is bound by residues Gly74 to Thr81 and Asp152 to Gln155. Glu153 acts as the Proton acceptor in catalysis. Position 184 (Tyr184) interacts with substrate. Residues Cys209 and Cys212 each coordinate Zn(2+). Tyr237 lines the substrate pocket. Cys241 serves as a coordination point for Zn(2+).

This sequence belongs to the thymidine kinase family.

It catalyses the reaction thymidine + ATP = dTMP + ADP + H(+). This is Thymidine kinase (TK) from Oryza sativa subsp. japonica (Rice).